Consider the following 424-residue polypeptide: MAKNIQAIRGMNDYLPGETAIWQRIEGTLKNVLGSYGYSEIRLPIVEQTPLFKRAIGEVTDVVEKEMYTFEDRNGDSLTLRPEGTAGCVRAGIEHGLLYNQEQRLWYIGPMFRHERPQKGRYRQFHQLGAEVFGLQGPDIDAELIMLTARWWRALGISEHVSLELNSIGSLEARANYRDALVAFLEQHQETLDEDCKRRMYTNPLRVLDSKNPDVQALLNDAPVLGDYLDDDSREHFTGLCKLLDAAGIAYTVNQRLVRGLDYYNRTVFEWVTNSLGSQGTVCAGGRYDGLVEQLGGRATPAVGFAMGLERLVLLVQAVNPEFIASPVVDIYLVAAGAQTQSAAMTLAERLRDEMPGVKLMTNHGGGNFKKQFARADKWGARIALVLGESEVADGTVVVKDLRSGEQTAVAQDSVAAHLRTLLG.

It belongs to the class-II aminoacyl-tRNA synthetase family. Homodimer.

The protein localises to the cytoplasm. It carries out the reaction tRNA(His) + L-histidine + ATP = L-histidyl-tRNA(His) + AMP + diphosphate + H(+). The sequence is that of Histidine--tRNA ligase from Salmonella paratyphi A (strain ATCC 9150 / SARB42).